The sequence spans 346 residues: uncharacterized protein (346 aa).

This is an uncharacterized protein from Schizosaccharomyces pombe (strain 972 / ATCC 24843) (Fission yeast).